The following is a 367-amino-acid chain: Undecaprenyl-phosphate alpha-N-acetylglucosaminyl 1-phosphate transferase (367 aa).

The next 9 helical transmembrane spans lie at 3–23, 45–65, 69–89, 129–149, 158–178, 187–207, 213–233, 242–262, and 318–338; these read LLTA…FIFL, GVIP…MFGL, YIPH…VGAM, WELV…WAAI, IDGL…LILW, MWCF…LGIL, VFMG…LLLE, ISPV…VAIM, and VPEW…GYCI.

The protein belongs to the glycosyltransferase 4 family. WecA subfamily. Mg(2+) serves as cofactor. It depends on Mn(2+) as a cofactor.

It is found in the cell inner membrane. It carries out the reaction di-trans,octa-cis-undecaprenyl phosphate + UDP-N-acetyl-alpha-D-glucosamine = N-acetyl-alpha-D-glucosaminyl-di-trans,octa-cis-undecaprenyl diphosphate + UMP. Its pathway is bacterial outer membrane biogenesis; LPS O-antigen biosynthesis. It participates in bacterial outer membrane biogenesis; enterobacterial common antigen biosynthesis. With respect to regulation, inhibited by tunicamycin. Catalyzes the transfer of the GlcNAc-1-phosphate moiety from UDP-GlcNAc onto the carrier lipid undecaprenyl phosphate (C55-P), yielding GlcNAc-pyrophosphoryl-undecaprenyl (GlcNAc-PP-C55). The sequence is that of Undecaprenyl-phosphate alpha-N-acetylglucosaminyl 1-phosphate transferase from Salmonella typhimurium (strain LT2 / SGSC1412 / ATCC 700720).